The sequence spans 276 residues: Acetyl-coenzyme A carboxylase carboxyl transferase subunit beta (276 aa).

Positions 24 to 276 (LWRECSNCHE…NNLLNLHSDK (253 aa)) constitute a CoA carboxyltransferase N-terminal domain. Zn(2+)-binding residues include Cys28, Cys31, Cys46, and Cys49. The segment at 28–49 (CSNCHEKFYYRRAGVYEVCPNC) adopts a C4-type zinc-finger fold.

This sequence belongs to the AccD/PCCB family. Acetyl-CoA carboxylase is a heterohexamer composed of biotin carboxyl carrier protein (AccB), biotin carboxylase (AccC) and two subunits each of ACCase subunit alpha (AccA) and ACCase subunit beta (AccD). Zn(2+) serves as cofactor.

It localises to the cytoplasm. It carries out the reaction N(6)-carboxybiotinyl-L-lysyl-[protein] + acetyl-CoA = N(6)-biotinyl-L-lysyl-[protein] + malonyl-CoA. The protein operates within lipid metabolism; malonyl-CoA biosynthesis; malonyl-CoA from acetyl-CoA: step 1/1. Component of the acetyl coenzyme A carboxylase (ACC) complex. Biotin carboxylase (BC) catalyzes the carboxylation of biotin on its carrier protein (BCCP) and then the CO(2) group is transferred by the transcarboxylase to acetyl-CoA to form malonyl-CoA. This chain is Acetyl-coenzyme A carboxylase carboxyl transferase subunit beta, found in Pediococcus pentosaceus (strain ATCC 25745 / CCUG 21536 / LMG 10740 / 183-1w).